We begin with the raw amino-acid sequence, 371 residues long: Peptide chain release factor 2 (371 aa).

Gln251 bears the N5-methylglutamine mark.

It belongs to the prokaryotic/mitochondrial release factor family. In terms of processing, methylated by PrmC. Methylation increases the termination efficiency of RF2.

It is found in the cytoplasm. Its function is as follows. Peptide chain release factor 2 directs the termination of translation in response to the peptide chain termination codons UGA and UAA. The polypeptide is Peptide chain release factor 2 (Pseudarthrobacter chlorophenolicus (strain ATCC 700700 / DSM 12829 / CIP 107037 / JCM 12360 / KCTC 9906 / NCIMB 13794 / A6) (Arthrobacter chlorophenolicus)).